The sequence spans 143 residues: Crossover junction endodeoxyribonuclease Hjc (143 aa).

Position 12 (Glu-12) interacts with Mg(2+). Residue Ser-32 is part of the active site. Positions 42 and 55 each coordinate Mg(2+).

Belongs to the Holliday junction resolvase Hjc family. In terms of assembly, homodimer. Mg(2+) serves as cofactor.

The enzyme catalyses Endonucleolytic cleavage at a junction such as a reciprocal single-stranded crossover between two homologous DNA duplexes (Holliday junction).. In terms of biological role, a structure-specific endonuclease that resolves Holliday junction (HJ) intermediates during genetic recombination. Cleaves 4-way DNA junctions introducing paired nicks in opposing strands, leaving a 5'-terminal phosphate and a 3'-terminal hydroxyl group that are subsequently ligated to produce recombinant products. Its function is as follows. Hjc, Hjm (Hel308) and PINA coordinate HJ migration and cleavage of replication forks in a coordinated way. In Saccharolobus islandicus (strain REY15A) (Sulfolobus islandicus), this protein is Crossover junction endodeoxyribonuclease Hjc.